A 223-amino-acid chain; its full sequence is Cytidylate kinase (223 aa).

12–20 (GPSGVGKGT) serves as a coordination point for ATP.

Belongs to the cytidylate kinase family. Type 1 subfamily.

Its subcellular location is the cytoplasm. The catalysed reaction is CMP + ATP = CDP + ADP. It catalyses the reaction dCMP + ATP = dCDP + ADP. This is Cytidylate kinase from Xylella fastidiosa (strain 9a5c).